A 515-amino-acid polypeptide reads, in one-letter code: Protein DETOXIFICATION 32 (515 aa).

The segment covering 1 to 26 (METLNVDHEDTISSEQEHRAHTKSDT) has biased composition (basic and acidic residues). The tract at residues 1 to 30 (METLNVDHEDTISSEQEHRAHTKSDTDMPP) is disordered. 12 helical membrane-spanning segments follow: residues 48–68 (LWWL…LGAV), 90–110 (VISG…ATLC), 131–151 (IILN…TPLL), 167–187 (FSLW…TAKF), 194–214 (VIAM…LSWL), 225–245 (GGAV…IVYI), 276–296 (AVMV…AGYL), 303–323 (VAAL…AFGF), 347–367 (LIVA…TLIV), 392–412 (LLAL…VAVG), 418–438 (IVAY…GLVL), and 448–468 (GIWT…LFII). Residues 488 to 497 (GDQSNKREEI) show a composition bias toward basic and acidic residues. Residues 488–515 (GDQSNKREEIDLCEEDENNSNGENNHRK) are disordered. A compositionally biased stretch (low complexity) spans 506–515 (NSNGENNHRK).

Belongs to the multi antimicrobial extrusion (MATE) (TC 2.A.66.1) family.

Its subcellular location is the membrane. This chain is Protein DETOXIFICATION 32, found in Arabidopsis thaliana (Mouse-ear cress).